A 66-amino-acid polypeptide reads, in one-letter code: Moricin-1 (66 aa).

The N-terminal stretch at 1–24 (MNILKFFFVFIVAMSLVSCSTAAP) is a signal peptide.

As to expression, expressed in fat body and to a lesser extent in hemocyte and Malpighian tubules.

It is found in the secreted. In terms of biological role, has antibacterial activity against Gram-positive and Gram-negative bacteria. Probably acts by disturbing membrane functions with its amphipathic structure. This is Moricin-1 (MOR1) from Bombyx mori (Silk moth).